The sequence spans 126 residues: Large ribosomal subunit protein bL21 (126 aa).

Residues 105-126 (KKPSVGPRAKRTKAAPAAEAAE) are disordered.

In terms of assembly, contacts protein L20. Part of the 50S ribosomal subunit.

This protein binds to 23S rRNA in the presence of protein L20. In Rhodopseudomonas palustris (strain ATCC BAA-98 / CGA009), this protein is Large ribosomal subunit protein bL21.